Reading from the N-terminus, the 373-residue chain is Chaperone protein DnaJ (373 aa).

The J domain occupies 5–70 (DYYEVLGLQK…EKKSNYDQFG (66 aa)). Residues 132-214 (GVEKEITVNR…CRGNGNVRKT (83 aa)) form a CR-type zinc finger. 8 residues coordinate Zn(2+): cysteine 145, cysteine 148, cysteine 162, cysteine 165, cysteine 188, cysteine 191, cysteine 202, and cysteine 205. CXXCXGXG motif repeat units follow at residues 145-152 (CEHCNGSG), 162-169 (CPTCSGTG), 188-195 (CDRCSGTG), and 202-209 (CTHCRGNG).

The protein belongs to the DnaJ family. As to quaternary structure, homodimer. It depends on Zn(2+) as a cofactor.

The protein resides in the cytoplasm. Its function is as follows. Participates actively in the response to hyperosmotic and heat shock by preventing the aggregation of stress-denatured proteins and by disaggregating proteins, also in an autonomous, DnaK-independent fashion. Unfolded proteins bind initially to DnaJ; upon interaction with the DnaJ-bound protein, DnaK hydrolyzes its bound ATP, resulting in the formation of a stable complex. GrpE releases ADP from DnaK; ATP binding to DnaK triggers the release of the substrate protein, thus completing the reaction cycle. Several rounds of ATP-dependent interactions between DnaJ, DnaK and GrpE are required for fully efficient folding. Also involved, together with DnaK and GrpE, in the DNA replication of plasmids through activation of initiation proteins. This chain is Chaperone protein DnaJ, found in Clostridium botulinum (strain Alaska E43 / Type E3).